We begin with the raw amino-acid sequence, 121 residues long: Large ribosomal subunit protein bL12 (121 aa).

It belongs to the bacterial ribosomal protein bL12 family. As to quaternary structure, homodimer. Part of the ribosomal stalk of the 50S ribosomal subunit. Forms a multimeric L10(L12)X complex, where L10 forms an elongated spine to which 2 to 4 L12 dimers bind in a sequential fashion. Binds GTP-bound translation factors.

Its function is as follows. Forms part of the ribosomal stalk which helps the ribosome interact with GTP-bound translation factors. Is thus essential for accurate translation. The sequence is that of Large ribosomal subunit protein bL12 from Lachnospira eligens (strain ATCC 27750 / DSM 3376 / VPI C15-48 / C15-B4) (Eubacterium eligens).